Consider the following 102-residue polypeptide: NADH-quinone oxidoreductase subunit K (102 aa).

3 helical membrane passes run 6–26, 30–50, and 62–82; these read MEHG…GLMV, ILFI…AFVV, and VMFI…LAIL.

The protein belongs to the complex I subunit 4L family. As to quaternary structure, NDH-1 is composed of 13 different subunits. Subunits NuoA, H, J, K, L, M, N constitute the membrane sector of the complex.

The protein localises to the cell inner membrane. It carries out the reaction a quinone + NADH + 5 H(+)(in) = a quinol + NAD(+) + 4 H(+)(out). NDH-1 shuttles electrons from NADH, via FMN and iron-sulfur (Fe-S) centers, to quinones in the respiratory chain. The immediate electron acceptor for the enzyme in this species is believed to be ubiquinone. Couples the redox reaction to proton translocation (for every two electrons transferred, four hydrogen ions are translocated across the cytoplasmic membrane), and thus conserves the redox energy in a proton gradient. The protein is NADH-quinone oxidoreductase subunit K of Ectopseudomonas mendocina (strain ymp) (Pseudomonas mendocina).